The following is a 254-amino-acid chain: Bowman-Birk type bran trypsin inhibitor (254 aa).

An N-terminal signal peptide occupies residues 1–22 (MSNTTMATSTILLFLLAGLAAA). Residues 23–118 (HGDGDTTIRL…KCTAALDGLS (96 aa)) constitute a propeptide that is removed on maturation. Repeats lie at residues 46–120 (KPWD…LSME), 121–187 (RPWK…FCTP), and 188–251 (RPWG…CKPR). Disulfide bonds link Cys-125–Cys-185, Cys-126–Cys-143, Cys-152–Cys-159, Cys-156–Cys-172, Cys-193–Cys-248, Cys-194–Cys-209, Cys-199–Cys-207, Cys-216–Cys-223, and Cys-220–Cys-236. The propeptide occupies 252–254 (AEN).

It belongs to the Bowman-Birk serine protease inhibitor family.

This is Bowman-Birk type bran trypsin inhibitor (RBBI3.3) from Oryza sativa subsp. japonica (Rice).